The following is a 540-amino-acid chain: Homoserine O-acetyltransferase (540 aa).

Positions 66-404 constitute an AB hydrolase-1 domain; that stretch reads NVILICHALT…QHGHDAFLLE (339 aa). Ser-171 serves as the catalytic Nucleophile. Arg-240 is a binding site for substrate. Residues 262-284 are disordered; that stretch reads QDTDKSGIKGTTGTEGKNSSEIS. Catalysis depends on residues Asp-365 and His-398. Asp-399 lines the substrate pocket. CBS domains lie at 425-484 and 486-540; these read MNRN…ELDE and ITRD…GKYD.

This sequence belongs to the AB hydrolase superfamily. MetX family. In terms of assembly, homodimer.

The protein resides in the cytoplasm. The catalysed reaction is L-homoserine + acetyl-CoA = O-acetyl-L-homoserine + CoA. It participates in amino-acid biosynthesis; L-methionine biosynthesis via de novo pathway; O-acetyl-L-homoserine from L-homoserine: step 1/1. Its function is as follows. Transfers an acetyl group from acetyl-CoA to L-homoserine, forming acetyl-L-homoserine. In vitro, can also use propionyl-CoA or butiryl-CoA as acyl donor. The protein is Homoserine O-acetyltransferase of Methanosarcina acetivorans (strain ATCC 35395 / DSM 2834 / JCM 12185 / C2A).